The chain runs to 417 residues: Citrate synthase-related protein DDB_G0287281 (417 aa).

The tract at residues 284 to 317 (NKNNNNNNNNNNNNNNNNNNNNNNNNSEDDDDDN) is disordered. Positions 286–309 (NNNNNNNNNNNNNNNNNNNNNNNN) are enriched in low complexity.

The protein belongs to the citrate synthase family.

This Dictyostelium discoideum (Social amoeba) protein is Citrate synthase-related protein DDB_G0287281.